Reading from the N-terminus, the 157-residue chain is Sorting nexin-3 (157 aa).

The segment at 1–21 is disordered; sequence MSKPFQPISDVINTSPKNKSQ. A compositionally biased stretch (polar residues) spans 11-21; it reads VINTSPKNKSQ. In terms of domain architecture, PX spans 32-152; sequence NFLEIEVKNP…EFIQNEKWDP (121 aa). The a 1,2-diacyl-sn-glycero-3-phospho-(1D-myo-inositol-3-phosphate) site is built by arginine 75, serine 77, lysine 101, and arginine 117.

This sequence belongs to the sorting nexin family.

The protein resides in the cytoplasm. Its subcellular location is the golgi apparatus membrane. It is found in the prevacuolar compartment membrane. In terms of biological role, required for retention of late Golgi membrane proteins. Component of the retrieval machinery that functions by direct interaction with the cytosolic tails of certain TGN membrane proteins during the sorting/budding process at the prevacuolar compartment. Binds phosphatidylinositol 3-phosphate (PtdIns(P3)). This Candida albicans (strain SC5314 / ATCC MYA-2876) (Yeast) protein is Sorting nexin-3 (SNX3).